The following is a 225-amino-acid chain: Red fluorescent protein drFP583 (225 aa).

The segment at residues 66-68 (QYG) is a cross-link (2-iminomethyl-5-imidazolinone (Gln-Gly)). Tyr67 carries the post-translational modification (Z)-2,3-didehydrotyrosine.

This sequence belongs to the GFP family. In terms of assembly, homotetramer. Contains a chromophore consisting of modified amino acid residues. The chromophore is formed by autocatalytic backbone condensation between Xaa-N and Gly-(N+2), oxidation of Tyr-(N+1) to didehydrotyrosine, and formation of a double bond to the alpha-amino nitrogen of residue Xaa-N. Maturation of the chromophore requires nothing other than molecular oxygen.

Its function is as follows. Thought to play a role in photoprotection of the coral's resident symbiont microalgae's photosystems from photoinhibition caused by high light levels found near the surface of coral reefs. In deeper water, the fluorescence may be to convert blue light into longer wavelengths more suitable for use in photosynthesis by the microalgal symbionts. This chain is Red fluorescent protein drFP583, found in Discosoma sp. (Sea anemone).